The chain runs to 244 residues: 5-oxoprolinase subunit A (244 aa).

It belongs to the LamB/PxpA family. In terms of assembly, forms a complex composed of PxpA, PxpB and PxpC.

The catalysed reaction is 5-oxo-L-proline + ATP + 2 H2O = L-glutamate + ADP + phosphate + H(+). Its function is as follows. Catalyzes the cleavage of 5-oxoproline to form L-glutamate coupled to the hydrolysis of ATP to ADP and inorganic phosphate. In Salmonella heidelberg (strain SL476), this protein is 5-oxoprolinase subunit A.